A 218-amino-acid chain; its full sequence is Large ribosomal subunit protein uL3 (218 aa).

The disordered stretch occupies residues Gly134 to Gln154. Gln154 is modified (N5-methylglutamine).

This sequence belongs to the universal ribosomal protein uL3 family. As to quaternary structure, part of the 50S ribosomal subunit. Forms a cluster with proteins L14 and L19. Post-translationally, methylated by PrmB.

Its function is as follows. One of the primary rRNA binding proteins, it binds directly near the 3'-end of the 23S rRNA, where it nucleates assembly of the 50S subunit. The protein is Large ribosomal subunit protein uL3 of Polynucleobacter necessarius subsp. necessarius (strain STIR1).